Here is a 150-residue protein sequence, read N- to C-terminus: Deoxyuridine 5'-triphosphate nucleotidohydrolase (150 aa).

Substrate is bound by residues 69 to 71 (RSG), Asn82, 86 to 88 (LID), and Met96.

This sequence belongs to the dUTPase family. Requires Mg(2+) as cofactor.

It carries out the reaction dUTP + H2O = dUMP + diphosphate + H(+). It functions in the pathway pyrimidine metabolism; dUMP biosynthesis; dUMP from dCTP (dUTP route): step 2/2. In terms of biological role, this enzyme is involved in nucleotide metabolism: it produces dUMP, the immediate precursor of thymidine nucleotides and it decreases the intracellular concentration of dUTP so that uracil cannot be incorporated into DNA. In Acinetobacter baumannii (strain AB307-0294), this protein is Deoxyuridine 5'-triphosphate nucleotidohydrolase.